The following is a 550-amino-acid chain: Methionine--tRNA ligase (550 aa).

Positions 12–22 match the 'HIGH' region motif; the sequence is PYANGPLHFGH. Zn(2+) contacts are provided by C144, C147, C157, and C160. The 'KMSKS' region signature appears at 330-334; the sequence is QFSKS. K333 is an ATP binding site.

Belongs to the class-I aminoacyl-tRNA synthetase family. MetG type 1 subfamily. Monomer. The cofactor is Zn(2+).

It is found in the cytoplasm. The catalysed reaction is tRNA(Met) + L-methionine + ATP = L-methionyl-tRNA(Met) + AMP + diphosphate. Its function is as follows. Is required not only for elongation of protein synthesis but also for the initiation of all mRNA translation through initiator tRNA(fMet) aminoacylation. The polypeptide is Methionine--tRNA ligase (Chlamydia caviae (strain ATCC VR-813 / DSM 19441 / 03DC25 / GPIC) (Chlamydophila caviae)).